The chain runs to 216 residues: Endoplasmic reticulum vesicle protein 25 (216 aa).

The signal sequence occupies residues 1–20; that stretch reads MASLKSLLSGFLLLAGAAQA. At 21-185 the chain is on the lumenal side; it reads LKFDLEATSS…TNESTNNRVK (165 aa). A GOLD domain is found at 36–126; sequence RRCIRNFVNK…RRHVELDIDI (91 aa). Residues 186-206 traverse the membrane as a helical segment; it reads WFGMATTFLLIALWGWQIMYL. Residues 207–216 are Cytoplasmic-facing; sequence RAYFRSKHLI.

Belongs to the EMP24/GP25L family.

Its subcellular location is the endoplasmic reticulum membrane. The protein resides in the golgi apparatus membrane. Its function is as follows. Constituent of COPII-coated endoplasmic reticulum-derived transport vesicles. Required for efficient transport of a subset of secretory proteins to the Golgi. Facilitates retrograde transport from the Golgi to the endoplasmic reticulum. This Neurospora crassa (strain ATCC 24698 / 74-OR23-1A / CBS 708.71 / DSM 1257 / FGSC 987) protein is Endoplasmic reticulum vesicle protein 25 (erv-1).